The following is a 552-amino-acid chain: (R)-mandelonitrile lyase-like (552 aa).

Positions 1–28 (MTKRIDSSLLYTALVVLLLLGVVHRSNA) are cleaved as a signal peptide. A glycan (N-linked (GlcNAc...) asparagine) is linked at asparagine 44. An FAD-binding site is contributed by 55–82 (DYIIVGGGTAGCPLAATLSQSFRVLLLE). N-linked (GlcNAc...) asparagine glycans are attached at residues asparagine 162, asparagine 259, and asparagine 434. Histidine 492 serves as the catalytic Proton acceptor.

Belongs to the GMC oxidoreductase family. Monomer. Requires FAD as cofactor. Glycosylated.

The enzyme catalyses (R)-mandelonitrile = benzaldehyde + hydrogen cyanide. The chain is (R)-mandelonitrile lyase-like from Arabidopsis thaliana (Mouse-ear cress).